The following is a 477-amino-acid chain: MGRKEEEDCSSWKKQTTNIRKTFIFMEVLGSGAFSEVFLVKQRVTGKLFALKCIKKSPAFRDSSLENEIAVLKRIKHENIVTLEDIYESTTHYYLVMQLVSGGELFDRILERGVYTEKDASLVIQQVLSAVKYLHENGIVHRDLKPENLLYLTPEENSKIMITDFGLSKMEQNGVMSTACGTPGYVAPEVLAQKPYSKAVDCWSIGVITYILLCGYPPFYEETESKLFEKIKEGYYEFESPFWDDISESAKDFICHLLEKDPNERYTCEKALRHPWIDGNTALHRDIYPSVSLQIQKNFAKSKWRQAFNAAAVVHHMRKLHMNLHSPSVRQEVENRPPVSPAPEVSRPDSHDSSITEAPILDPSTPLPALTRLPCSHSSRPSAPSGGRSLNCLVNGSLRISSSLVPMQQGPLATGPCGCCSSCLNIGNKGKSSYCSEPTLFRKANKKQNFKSEVMVPVKAGGSTHCRGGQTGVCLVM.

The Protein kinase domain maps to F23–I277. Residues L29–V37 and K52 each bind ATP. Catalysis depends on D143, which acts as the Proton acceptor. The autoinhibitory domain stretch occupies residues I277–M317. Residues K297 to R318 form a calmodulin-binding region. The segment at S326–R388 is disordered. Residues S376–R388 are compositionally biased toward low complexity.

The protein belongs to the protein kinase superfamily. CAMK Ser/Thr protein kinase family. CaMK subfamily. Post-translationally, may be prenylated on Cys-474. In terms of tissue distribution, highly expressed in brain, in neuronal cell bodies of the central nucleus of amygdala and ventromedial hypothalamic nucleus. Also detected in heart, testis, and kidney.

It is found in the cytoplasm. The protein localises to the golgi apparatus membrane. Its subcellular location is the cell membrane. The catalysed reaction is L-seryl-[protein] + ATP = O-phospho-L-seryl-[protein] + ADP + H(+). The enzyme catalyses L-threonyl-[protein] + ATP = O-phospho-L-threonyl-[protein] + ADP + H(+). Activated by Ca(2+)/calmodulin. Binding of calmodulin is thought to result in a conformational change and leads to activation through phosphorylation by CAMKK1. Functionally, calcium/calmodulin-dependent protein kinase belonging to a proposed calcium-triggered signaling cascade. In vitro phosphorylates transcription factor CREB1. In Mus musculus (Mouse), this protein is Calcium/calmodulin-dependent protein kinase type 1G (Camk1g).